The following is a 383-amino-acid chain: Acetylornithine deacetylase (383 aa).

A Zn(2+)-binding site is contributed by H80. D82 is a catalytic residue. Residue D112 coordinates Zn(2+). The active site involves E144. Zn(2+)-binding residues include E145, E169, and H355.

Belongs to the peptidase M20A family. ArgE subfamily. As to quaternary structure, homodimer. The cofactor is Zn(2+). Co(2+) serves as cofactor. It depends on glutathione as a cofactor.

It localises to the cytoplasm. It carries out the reaction N(2)-acetyl-L-ornithine + H2O = L-ornithine + acetate. The protein operates within amino-acid biosynthesis; L-arginine biosynthesis; L-ornithine from N(2)-acetyl-L-ornithine (linear): step 1/1. In terms of biological role, catalyzes the hydrolysis of the amide bond of N(2)-acetylated L-amino acids. Cleaves the acetyl group from N-acetyl-L-ornithine to form L-ornithine, an intermediate in L-arginine biosynthesis pathway, and a branchpoint in the synthesis of polyamines. This chain is Acetylornithine deacetylase, found in Escherichia coli O17:K52:H18 (strain UMN026 / ExPEC).